The following is a 449-amino-acid chain: Intestinal acid phosphatase (449 aa).

The N-terminal stretch at 1–19 is a signal peptide; sequence MVSAISIVAIFALEGFVTT. The Extracellular segment spans residues 20–428; it reads YSDGTKDLVF…TDLNKSSSFA (409 aa). The Nucleophile role is filled by H36. The active-site Proton donor is D321. The chain crosses the membrane as a helical span at residues 429 to 449; it reads TVSMLFIAAILAINNNFLGLF.

This sequence belongs to the histidine acid phosphatase family. Homodimer. Post-translationally, the N-terminus is blocked. As to expression, expressed in the intestine, specifically on the edge of the gut lumen, in the 14 posterior cells of the intestine.

It is found in the membrane. It catalyses the reaction a phosphate monoester + H2O = an alcohol + phosphate. Its function is as follows. Acid phosphatase required for normal growth and development. Specifically required for normal gut differentiation. This is Intestinal acid phosphatase from Caenorhabditis elegans.